The chain runs to 106 residues: UPF0145 protein Pfl01_1745 (106 aa).

It belongs to the UPF0145 family.

This Pseudomonas fluorescens (strain Pf0-1) protein is UPF0145 protein Pfl01_1745.